The primary structure comprises 533 residues: UDP-glucuronosyltransferase 1-2 (533 aa).

The first 27 residues, 1 to 27, serve as a signal peptide directing secretion; sequence MDTGLCVPLRGISGLLLLLCALPWAEG. N-linked (GlcNAc...) asparagine glycans are attached at residues Asn-141, Asn-295, and Asn-433. A helical transmembrane segment spans residues 491 to 511; that stretch reads VIGFLLAIVLTVVFIVFKCCA.

It belongs to the UDP-glycosyltransferase family. In terms of tissue distribution, expressed in kidney.

The protein resides in the microsome. It localises to the endoplasmic reticulum membrane. It carries out the reaction glucuronate acceptor + UDP-alpha-D-glucuronate = acceptor beta-D-glucuronoside + UDP + H(+). UDPGT is of major importance in the conjugation and subsequent elimination of potentially toxic xenobiotics and endogenous compounds. The protein is UDP-glucuronosyltransferase 1-2 (Ugt1a2) of Mus musculus (Mouse).